Here is a 646-residue protein sequence, read N- to C-terminus: Phosphomethylpyrimidine synthase (646 aa).

The segment covering 1–13 (MNIRSNPDTTRPA) has biased composition (polar residues). A disordered region spans residues 1-21 (MNIRSNPDTTRPAVTTGGLPS). Residues N221, M250, Y279, H315, 335-337 (SRG), 376-379 (DGLR), and E415 each bind substrate. H419 contacts Zn(2+). Y442 serves as a coordination point for substrate. H483 lines the Zn(2+) pocket. The [4Fe-4S] cluster site is built by C563, C566, and C571.

This sequence belongs to the ThiC family. Homodimer. It depends on [4Fe-4S] cluster as a cofactor.

The catalysed reaction is 5-amino-1-(5-phospho-beta-D-ribosyl)imidazole + S-adenosyl-L-methionine = 4-amino-2-methyl-5-(phosphooxymethyl)pyrimidine + CO + 5'-deoxyadenosine + formate + L-methionine + 3 H(+). The protein operates within cofactor biosynthesis; thiamine diphosphate biosynthesis. Functionally, catalyzes the synthesis of the hydroxymethylpyrimidine phosphate (HMP-P) moiety of thiamine from aminoimidazole ribotide (AIR) in a radical S-adenosyl-L-methionine (SAM)-dependent reaction. This chain is Phosphomethylpyrimidine synthase, found in Rhodopseudomonas palustris (strain HaA2).